A 196-amino-acid polypeptide reads, in one-letter code: Dephospho-CoA kinase (196 aa).

Residues 6–196 (AIALTGGIGT…QVERFLKTLL (191 aa)) form the DPCK domain. 14 to 19 (GTGKST) lines the ATP pocket.

This sequence belongs to the CoaE family.

The protein localises to the cytoplasm. It catalyses the reaction 3'-dephospho-CoA + ATP = ADP + CoA + H(+). It functions in the pathway cofactor biosynthesis; coenzyme A biosynthesis; CoA from (R)-pantothenate: step 5/5. Catalyzes the phosphorylation of the 3'-hydroxyl group of dephosphocoenzyme A to form coenzyme A. This Helicobacter pylori (strain ATCC 700392 / 26695) (Campylobacter pylori) protein is Dephospho-CoA kinase.